The sequence spans 521 residues: MEASVLSPTSWEKRRAWLRQSRNWQTQVLEEEAAAALQDVPDPEPSSLDDVFQEGNPINKIEDWLQDCGYSEEGFSEEAGQFIYNGFCSHGTSFEDDLTLGAEATLLAANGKLFSRSFLETARPCQLLDLGCSLASSSMTGGTNKTSSSISEILDKVQEDAEDVLFSLGFGQEDHKDTSRIPARFFTTPSQAKGIDFQLFLKSQVRRIEMEDPCLMLASRFKQVQTLAVTADAFFCLYSYVSKTPVQKFTPSHMFWNCNHPTDVPSIRILSREPEPQSPRDRLRKAISKMCLYTCPRDRPPPPHNTPKRNSLDQVVLEVMDKVKEEKQFLQQDSDLGQFSQEDPVPPAEGKKLPTSPYPCVFCCEEETQQRMSTVLAPSQTLDSNPKVPCCTHSLPIEDPQWSTDPAQIRRELCSLPATNTETHPAKDETFWKRKSRARKSLFQKNLMGRKVKSLDLSITQQKWKQSVDRPELRRSLSQQPQDTFDLEEVQSNSEEEQSQSRWPSRPRHPHHHQTFAGKDS.

Ser-311 is subject to Phosphoserine. The segment covering 331–341 has biased composition (polar residues); the sequence is QQDSDLGQFSQ. Disordered regions lie at residues 331 to 351 and 461 to 521; these read QQDSDLGQFSQEDPVPPAEGK and QQKW…GKDS. Over residues 466–475 the composition is skewed to basic and acidic residues; that stretch reads QSVDRPELRR. The segment covering 485-498 has biased composition (acidic residues); it reads FDLEEVQSNSEEEQ. Positions 505–514 are enriched in basic residues; it reads SRPRHPHHHQ.

As to quaternary structure, interacts with PLCG1 and GRB2; the association is increased with prolonged stimulation of the TCR and may facilitate the assembly of the LAT signalosome. Interacts with ITPR1. Also interacts with ITPR3. Interacts with HSPA9. In terms of processing, may be phosphorylated in response to store-operated Ca(+2) entry.

The protein resides in the cytoplasm. The protein localises to the endoplasmic reticulum membrane. In terms of biological role, required for the development and maturation of T-cells, its function being essential for the late stages of thymocyte development. Plays a role in T-cell antigen receptor (TCR)-mediated activation of the ERK and NFAT signaling pathways, possibly by serving as a scaffolding protein that promotes the assembly of the LAT signalosome in thymocytes. May play a role in the regulation of inositol 1,4,5-trisphosphate receptor-mediated Ca(2+) release and mitochondrial Ca(2+) uptake via the mitochondria-associated endoplasmic reticulum membrane (MAM) compartment. In Homo sapiens (Human), this protein is Protein TESPA1 (TESPA1).